The primary structure comprises 334 residues: Glycerol-1-phosphate dehydrogenase [NAD(P)+] (334 aa).

NAD(+)-binding positions include 77 to 81 (GRPID) and 99 to 102 (TTAS). Aspartate 104 lines the substrate pocket. Serine 108 is an NAD(+) binding site. Aspartate 147 serves as a coordination point for substrate. Zn(2+)-binding residues include aspartate 147 and histidine 225. Residue histidine 229 coordinates substrate. Zn(2+) is bound at residue histidine 246.

This sequence belongs to the glycerol-1-phosphate dehydrogenase family. Zn(2+) serves as cofactor.

The protein localises to the cytoplasm. It catalyses the reaction sn-glycerol 1-phosphate + NAD(+) = dihydroxyacetone phosphate + NADH + H(+). The enzyme catalyses sn-glycerol 1-phosphate + NADP(+) = dihydroxyacetone phosphate + NADPH + H(+). The protein operates within membrane lipid metabolism; glycerophospholipid metabolism. Catalyzes the NAD(P)H-dependent reduction of dihydroxyacetonephosphate (DHAP or glycerone phosphate) to glycerol 1-phosphate (G1P). The G1P thus generated is used as the glycerophosphate backbone of phospholipids in the cellular membranes of Archaea. The sequence is that of Glycerol-1-phosphate dehydrogenase [NAD(P)+] from Methanococcus maripaludis (strain C5 / ATCC BAA-1333).